The sequence spans 449 residues: Naphthalene 1,2-dioxygenase system, large oxygenase component (449 aa).

Residues 39 to 137 (WLFLTHDSLI…LNKKCLGLKE (99 aa)) form the Rieske domain. Cys-81, His-83, Cys-101, and His-104 together coordinate [2Fe-2S] cluster. Fe cation is bound by residues His-208, His-213, and Asp-362.

Belongs to the bacterial ring-hydroxylating dioxygenase alpha subunit family. As to quaternary structure, the naphthalene dioxygenase (NDO) multicomponent enzyme system is composed of an electron transfer component and a dioxygenase component (iron sulfur protein (ISP)). The electron transfer component is composed of a ferredoxin reductase (NdoR) and a ferredoxin (NdoA), and the dioxygenase component is formed of a heterohexamer (trimer of heterodimers) of three large alpha subunits (NdoB) and three small beta subunits (NdoC). [2Fe-2S] cluster serves as cofactor. It depends on Fe(2+) as a cofactor.

It catalyses the reaction naphthalene + NADH + O2 + H(+) = (1R,2S)-1,2-dihydronaphthalene-1,2-diol + NAD(+). The protein operates within aromatic compound metabolism; naphthalene degradation. Functionally, component of the naphthalene dioxygenase (NDO) multicomponent enzyme system which catalyzes the incorporation of both atoms of molecular oxygen into naphthalene to form cis-(1R,2S)-dihydroxy-1,2-dihydronaphthalene. The alpha subunit has a catalytic role in the holoenzyme. In Pseudomonas fluorescens, this protein is Naphthalene 1,2-dioxygenase system, large oxygenase component.